The following is a 479-amino-acid chain: Ammonium transporter 3 member 2 (479 aa).

11 helical membrane-spanning segments follow: residues 34–54 (VAAT…YGGV), 59–79 (WAVN…ICWV), 139–159 (VVYF…GSLL), 164–184 (FLAW…VGAF), 202–222 (GGYV…YWVG), 237–257 (ILFT…FNGG), 272–292 (NTNI…VIFF), 297–317 (VVGA…AAGV), 321–341 (WAAL…MMIL), 355–375 (LGVF…TGLF), and 407–427 (IAGG…ICLA).

This sequence belongs to the ammonia transporter channel (TC 1.A.11.2) family.

It is found in the membrane. Functionally, involved in ammonium transport. The protein is Ammonium transporter 3 member 2 (AMT3-2) of Oryza sativa subsp. japonica (Rice).